A 123-amino-acid chain; its full sequence is Large ribosomal subunit protein uL14c (123 aa).

The protein belongs to the universal ribosomal protein uL14 family. As to quaternary structure, part of the 50S ribosomal subunit. Interacts with IOJAP.

Its subcellular location is the plastid. The protein localises to the chloroplast. In terms of biological role, binds to 23S rRNA. This chain is Large ribosomal subunit protein uL14c, found in Zea mays (Maize).